Consider the following 244-residue polypeptide: Phosphoadenosine 5'-phosphosulfate reductase (244 aa).

The active-site Nucleophile; cysteine thiosulfonate intermediate is the cysteine 239.

It belongs to the PAPS reductase family. CysH subfamily.

It is found in the cytoplasm. The enzyme catalyses [thioredoxin]-disulfide + sulfite + adenosine 3',5'-bisphosphate + 2 H(+) = [thioredoxin]-dithiol + 3'-phosphoadenylyl sulfate. The protein operates within sulfur metabolism; hydrogen sulfide biosynthesis; sulfite from sulfate: step 3/3. Its function is as follows. Catalyzes the formation of sulfite from phosphoadenosine 5'-phosphosulfate (PAPS) using thioredoxin as an electron donor. This is Phosphoadenosine 5'-phosphosulfate reductase from Citrobacter koseri (strain ATCC BAA-895 / CDC 4225-83 / SGSC4696).